The primary structure comprises 418 residues: Glutamyl-tRNA reductase (418 aa).

Residues 49–52 (TCNR), Ser-109, 114–116 (EPQ), and Gln-120 contribute to the substrate site. Catalysis depends on Cys-50, which acts as the Nucleophile. 189–194 (GAGETI) is a binding site for NADP(+).

The protein belongs to the glutamyl-tRNA reductase family. As to quaternary structure, homodimer.

The catalysed reaction is (S)-4-amino-5-oxopentanoate + tRNA(Glu) + NADP(+) = L-glutamyl-tRNA(Glu) + NADPH + H(+). The protein operates within porphyrin-containing compound metabolism; protoporphyrin-IX biosynthesis; 5-aminolevulinate from L-glutamyl-tRNA(Glu): step 1/2. Its function is as follows. Catalyzes the NADPH-dependent reduction of glutamyl-tRNA(Glu) to glutamate 1-semialdehyde (GSA). The chain is Glutamyl-tRNA reductase from Citrobacter koseri (strain ATCC BAA-895 / CDC 4225-83 / SGSC4696).